The following is a 225-amino-acid chain: Ribose-5-phosphate isomerase A (225 aa).

Residues Thr26–Thr29, Asp82–Asp85, and Lys95–Gly98 each bind substrate. The Proton acceptor role is filled by Glu104. Lys122 serves as a coordination point for substrate.

This sequence belongs to the ribose 5-phosphate isomerase family. Homodimer.

The enzyme catalyses aldehydo-D-ribose 5-phosphate = D-ribulose 5-phosphate. Its pathway is carbohydrate degradation; pentose phosphate pathway; D-ribose 5-phosphate from D-ribulose 5-phosphate (non-oxidative stage): step 1/1. In terms of biological role, catalyzes the reversible conversion of ribose-5-phosphate to ribulose 5-phosphate. The polypeptide is Ribose-5-phosphate isomerase A (Streptococcus mutans serotype c (strain ATCC 700610 / UA159)).